The following is a 328-amino-acid chain: MLFSNNKIHAEGKLALIVGASQGLGADLALKLYQQNCSVILVARTETKLVAQIERIQSSSPENNATLSYKCCDASNYEDCVKLWNDLIVDQKQDPDFIFCCAGSSIPKLFSDLTAKDFAIGINTNYTTSLNITHTGFKQVLGQFSDLSCDQYKKRHVIFVSSVVSFYPFIGYSQYAPLKSAIQSLSIILRQEMGPFNYRVSCVFPGNFQSEGYEEEQKTKPSITKSIEGSSKPISGEDCADIILNQLNRGYDTVTTDFIGWLLGCSVLGVLPRSWGFFQVIVSFIFSIIAPIANYVVYRDVLKFFKTRSTREVEEYEIVSTDDNKKTL.

Position 16 (leucine 16) interacts with NADP(+). NADPH is bound by residues glycine 19, serine 21, and glycine 23. A GXSXG motif is present at residues 19–23 (GASQG). An NADP(+)-binding site is contributed by leucine 24. 3 residues coordinate NADPH: arginine 44, lysine 48, and aspartate 73. Aspartate 73 is an NADP(+) binding site. The active-site Proton donor is the serine 161. NADP(+) is bound by residues tyrosine 175, lysine 179, and serine 210. The active-site Proton acceptor is the tyrosine 175. Lysine 179 acts as the Lowers pKa of active site Tyr in catalysis. A helical transmembrane segment spans residues 277 to 297 (FFQVIVSFIFSIIAPIANYVV).

Belongs to the short-chain dehydrogenases/reductases (SDR) family.

It localises to the endoplasmic reticulum membrane. It catalyses the reaction sphinganine + NADP(+) = 3-oxosphinganine + NADPH + H(+). It participates in lipid metabolism; sphingolipid metabolism. Its function is as follows. Catalyzes the reduction of 3'-oxosphinganine (3-ketodihydrosphingosine/KDS) to sphinganine (dihydrosphingosine/DHS), the second step of de novo sphingolipid biosynthesis. This is 3-ketodihydrosphingosine reductase TSC10 (TSC10) from Debaryomyces hansenii (strain ATCC 36239 / CBS 767 / BCRC 21394 / JCM 1990 / NBRC 0083 / IGC 2968) (Yeast).